The sequence spans 387 residues: Acetate kinase (387 aa).

Asn14 provides a ligand contact to Mg(2+). Lys21 lines the ATP pocket. Position 80 (Arg80) interacts with substrate. The active-site Proton donor/acceptor is Asp137. ATP contacts are provided by residues 197-201 (HLGNG), 271-273 (DFR), and 319-323 (GIGEN). Glu373 contributes to the Mg(2+) binding site.

Belongs to the acetokinase family. Homodimer. It depends on Mg(2+) as a cofactor. Mn(2+) serves as cofactor.

The protein localises to the cytoplasm. The enzyme catalyses acetate + ATP = acetyl phosphate + ADP. The protein operates within metabolic intermediate biosynthesis; acetyl-CoA biosynthesis; acetyl-CoA from acetate: step 1/2. Functionally, catalyzes the formation of acetyl phosphate from acetate and ATP. Can also catalyze the reverse reaction. The sequence is that of Acetate kinase from Mycobacterium avium (strain 104).